A 415-amino-acid chain; its full sequence is Serine--tRNA ligase (415 aa).

L-serine is bound at residue 231-233 (TAE). Residue 262–264 (RSE) participates in ATP binding. An L-serine-binding site is contributed by Glu-285. 349-352 (EISS) contacts ATP. Ser-383 is an L-serine binding site.

The protein belongs to the class-II aminoacyl-tRNA synthetase family. Type-1 seryl-tRNA synthetase subfamily. In terms of assembly, homodimer. The tRNA molecule binds across the dimer.

Its subcellular location is the cytoplasm. It catalyses the reaction tRNA(Ser) + L-serine + ATP = L-seryl-tRNA(Ser) + AMP + diphosphate + H(+). It carries out the reaction tRNA(Sec) + L-serine + ATP = L-seryl-tRNA(Sec) + AMP + diphosphate + H(+). Its pathway is aminoacyl-tRNA biosynthesis; selenocysteinyl-tRNA(Sec) biosynthesis; L-seryl-tRNA(Sec) from L-serine and tRNA(Sec): step 1/1. Its function is as follows. Catalyzes the attachment of serine to tRNA(Ser). Is also able to aminoacylate tRNA(Sec) with serine, to form the misacylated tRNA L-seryl-tRNA(Sec), which will be further converted into selenocysteinyl-tRNA(Sec). In Helicobacter acinonychis (strain Sheeba), this protein is Serine--tRNA ligase.